A 352-amino-acid chain; its full sequence is C-C chemokine receptor type 5 (352 aa).

Over 1–30 the chain is Extracellular; sequence MDYQVSSPIYDINYYTSEPCQKINVKQIAA. Y3 is modified (sulfotyrosine). O-linked (GalNAc...) serine glycosylation is found at S6 and S7. 3 positions are modified to sulfotyrosine: Y10, Y14, and Y15. Intrachain disulfides connect C20–C269 and C101–C178. The chain crosses the membrane as a helical span at residues 31-58; that stretch reads RLLPPLYSLVFIFGFVGNMLVILILINC. At 59–68 the chain is on the cytoplasmic side; that stretch reads KRLKSMTDIY. A helical transmembrane segment spans residues 69 to 89; that stretch reads LLNLAISDLFFLLTVPFWAHY. Residues 90 to 102 lie on the Extracellular side of the membrane; it reads AAAQWDFGNTMCQ. The chain crosses the membrane as a helical span at residues 103 to 124; the sequence is LLTGLYFIGFFSGIFFIILLTI. At 125 to 141 the chain is on the cytoplasmic side; it reads DRYLAVVHAVFALKART. A helical transmembrane segment spans residues 142–166; the sequence is VTFGVVTSVITWVVAVFASLPGIIF. Residues 167–198 lie on the Extracellular side of the membrane; sequence TRSQKEGLHYTCSSHFPYSQYQFWKNFQTLKI. A helical membrane pass occupies residues 199–218; it reads VILGLVLPLLVMVICYSGIL. Residues 219–235 are Cytoplasmic-facing; the sequence is KTLLRCRNEKKRHRAVR. A helical membrane pass occupies residues 236 to 260; it reads LIFTIMIVYFLFWAPYNIVLLLNTF. The Extracellular portion of the chain corresponds to 261-277; sequence QEFFGLNNCSSSNRLDQ. Residues 278-301 form a helical membrane-spanning segment; that stretch reads AMQVTETLGMTHCCINPIIYAFVG. At 302–352 the chain is on the cytoplasmic side; sequence EKFRNYLLVFFQKHIAKRFCKCCSIFQQEAPERASSVYTRSTGEQEISVGL. Residues C321, C323, and C324 are each lipidated (S-palmitoyl cysteine). S336, S337, S342, and S349 each carry phosphoserine; by BARK1.

It belongs to the G-protein coupled receptor 1 family. As to quaternary structure, interacts with PRAF2. Efficient ligand binding to CCL3/MIP-1alpha and CCL4/MIP-1beta requires sulfation, O-glycosylation and sialic acid modifications. Glycosylation on Ser-6 is required for efficient binding of CCL4. Interacts with GRK2. Interacts with ARRB1 and ARRB2. Interacts with CNIH4. Interacts with S100A4; this interaction stimulates T-lymphocyte chemotaxis. (Microbial infection) Interacts with HIV-1 surface protein gp120. In terms of assembly, (Microbial infection) May interact with human cytomegalovirus/HHV-5 protein UL78. Post-translationally, sulfated on at least 2 of the N-terminal tyrosines. Sulfation contributes to the efficiency of HIV-1 entry and is required for efficient binding of the chemokines, CCL3 and CCL4. O-glycosylated, but not N-glycosylated. Ser-6 appears to be the major site even if Ser-7 may be also O-glycosylated. Also sialylated glycans present which contribute to chemokine binding. Thr-16 and Ser-17 may also be glycosylated and, if so, with small moieties such as a T-antigen. In terms of processing, palmitoylation in the C-terminal is important for cell surface expression, and to a lesser extent, for HIV entry. Post-translationally, phosphorylation on serine residues in the C-terminal is stimulated by binding CC chemokines especially by APO-RANTES. Highly expressed in spleen, thymus, in the myeloid cell line THP-1, in the promyeloblastic cell line KG-1a and on CD4+ and CD8+ T-cells. Medium levels in peripheral blood leukocytes and in small intestine. Low levels in ovary and lung.

The protein localises to the cell membrane. In terms of biological role, receptor for a number of inflammatory CC-chemokines including CCL3/MIP-1-alpha, CCL4/MIP-1-beta and RANTES and subsequently transduces a signal by increasing the intracellular calcium ion level. May play a role in the control of granulocytic lineage proliferation or differentiation. Participates in T-lymphocyte migration to the infection site by acting as a chemotactic receptor. Its function is as follows. (Microbial infection) Acts as a coreceptor (CD4 being the primary receptor) of human immunodeficiency virus-1/HIV-1. The chain is C-C chemokine receptor type 5 from Homo sapiens (Human).